The primary structure comprises 190 residues: Orotate phosphoribosyltransferase (190 aa).

114–122 (EDVITTGGS) provides a ligand contact to 5-phospho-alpha-D-ribose 1-diphosphate. Orotate-binding residues include T118 and R146.

It belongs to the purine/pyrimidine phosphoribosyltransferase family. PyrE subfamily. As to quaternary structure, homodimer. Mg(2+) serves as cofactor.

The enzyme catalyses orotidine 5'-phosphate + diphosphate = orotate + 5-phospho-alpha-D-ribose 1-diphosphate. It functions in the pathway pyrimidine metabolism; UMP biosynthesis via de novo pathway; UMP from orotate: step 1/2. Functionally, catalyzes the transfer of a ribosyl phosphate group from 5-phosphoribose 1-diphosphate to orotate, leading to the formation of orotidine monophosphate (OMP). This chain is Orotate phosphoribosyltransferase, found in Caldicellulosiruptor bescii (strain ATCC BAA-1888 / DSM 6725 / KCTC 15123 / Z-1320) (Anaerocellum thermophilum).